A 175-amino-acid polypeptide reads, in one-letter code: Probable S-adenosyl-L-methionine-binding protein VirR (175 aa).

Residues 35–165 (LFFVGKIRTP…DRSLSKPLAP (131 aa)) enclose the TsaA-like domain. Residues 52-54 (PRQ), 90-91 (HE), R114, T124, and 145-148 (LDGT) contribute to the S-adenosyl-L-methionine site.

Belongs to the tRNA methyltransferase O family.

The sequence is that of Probable S-adenosyl-L-methionine-binding protein VirR (virR) from Rhizobium radiobacter (Agrobacterium tumefaciens).